Here is a 360-residue protein sequence, read N- to C-terminus: Chorismate synthase (360 aa).

Position 46 (R46) interacts with NADP(+). Residues R123 to S125, N235 to A236, G275, K290 to S294, and R316 contribute to the FMN site.

Belongs to the chorismate synthase family. In terms of assembly, homotetramer. It depends on FMNH2 as a cofactor.

It catalyses the reaction 5-O-(1-carboxyvinyl)-3-phosphoshikimate = chorismate + phosphate. The protein operates within metabolic intermediate biosynthesis; chorismate biosynthesis; chorismate from D-erythrose 4-phosphate and phosphoenolpyruvate: step 7/7. Functionally, catalyzes the anti-1,4-elimination of the C-3 phosphate and the C-6 proR hydrogen from 5-enolpyruvylshikimate-3-phosphate (EPSP) to yield chorismate, which is the branch point compound that serves as the starting substrate for the three terminal pathways of aromatic amino acid biosynthesis. This reaction introduces a second double bond into the aromatic ring system. The sequence is that of Chorismate synthase from Wolinella succinogenes (strain ATCC 29543 / DSM 1740 / CCUG 13145 / JCM 31913 / LMG 7466 / NCTC 11488 / FDC 602W) (Vibrio succinogenes).